The primary structure comprises 115 residues: Non-specific lipid-transfer protein (115 aa).

Positions 1–24 (MASSAVTKLALVVALCMAVSVAHA) are cleaved as a signal peptide. 4 disulfides stabilise this stretch: Cys27–Cys74, Cys37–Cys51, Cys52–Cys97, and Cys72–Cys111.

The protein belongs to the plant LTP family.

Plant non-specific lipid-transfer proteins transfer phospholipids as well as galactolipids across membranes. May play a role in wax or cutin deposition in the cell walls of expanding epidermal cells and certain secretory tissues. The sequence is that of Non-specific lipid-transfer protein (MALD3) from Malus domestica (Apple).